Here is a 327-residue protein sequence, read N- to C-terminus: G-protein coupled receptor 55 (327 aa).

Topologically, residues Met1 to Thr20 are extracellular. N-linked (GlcNAc...) asparagine glycosylation is present at Asn8. The helical transmembrane segment at Leu21–Ile41 threads the bilayer. The Cytoplasmic segment spans residues Arg42–Ala57. A helical transmembrane segment spans residues Thr58–Phe78. At Lys79–Cys93 the chain is on the extracellular side. The helical transmembrane segment at Thr94–Ile114 threads the bilayer. Over Ser115–Lys136 the chain is Cytoplasmic. The chain crosses the membrane as a helical span at residues Thr137 to Thr157. Residues Phe158 to Ser179 lie on the Extracellular side of the membrane. Asn170 carries an N-linked (GlcNAc...) asparagine glycan. Residues Val180–Ser200 traverse the membrane as a helical segment. Residues Tyr201–Asn239 lie on the Cytoplasmic side of the membrane. The chain crosses the membrane as a helical span at residues Leu240–Val260. Topologically, residues Arg261–Gln279 are extracellular. Residues Leu280–Ile300 traverse the membrane as a helical segment. At Lys301–Gly327 the chain is on the cytoplasmic side.

Belongs to the G-protein coupled receptor 1 family. As to expression, highly expressed in splenic plasma cells.

Its subcellular location is the cell membrane. Functionally, G-protein coupled receptor that binds to several ligands including 2-arachidonoyl lysophosphatidylinositol or lysophosphatidylglucoside with high affinity, leading to rapid and transient activation of numerous intracellular signaling pathways. Induces the Ca(2+) release from intracellular stores via ERK, the heterotrimeric G protein GNA13 and RHOA leading to morphological changes including cell rounding and stress fiber formation. In macrophages, acts downstream of lysophosphatidylglucoside to inhibit the translocation of the phospholipid-transporting ABCA1 to plasma membrane and subsequent cholesterol efflux leading to lipid accumulation and foam cell formation. May be involved in hyperalgesia associated with inflammatory and neuropathic pain. This is G-protein coupled receptor 55 (Gpr55) from Mus musculus (Mouse).